A 336-amino-acid chain; its full sequence is Holliday junction branch migration complex subunit RuvB (336 aa).

The large ATPase domain (RuvB-L) stretch occupies residues 1-182; that stretch reads MKERIVNLET…FGMSFRMQFY (182 aa). Residues Leu21, Arg22, Gly63, Lys66, Thr67, Ser68, 129–131, Arg172, Tyr182, and Arg219 each bind ATP; that span reads EDF. Mg(2+) is bound at residue Thr67. The interval 183–253 is small ATPAse domain (RuvB-S); the sequence is SPSELALIIK…ITLHALNELG (71 aa). The interval 256-336 is head domain (RuvB-H); it reads ELGFDEADLA…IPTLKSQSLF (81 aa). DNA-binding residues include Arg310 and Arg315.

Belongs to the RuvB family. As to quaternary structure, homohexamer. Forms an RuvA(8)-RuvB(12)-Holliday junction (HJ) complex. HJ DNA is sandwiched between 2 RuvA tetramers; dsDNA enters through RuvA and exits via RuvB. An RuvB hexamer assembles on each DNA strand where it exits the tetramer. Each RuvB hexamer is contacted by two RuvA subunits (via domain III) on 2 adjacent RuvB subunits; this complex drives branch migration. In the full resolvosome a probable DNA-RuvA(4)-RuvB(12)-RuvC(2) complex forms which resolves the HJ.

The protein localises to the cytoplasm. It carries out the reaction ATP + H2O = ADP + phosphate + H(+). The RuvA-RuvB-RuvC complex processes Holliday junction (HJ) DNA during genetic recombination and DNA repair, while the RuvA-RuvB complex plays an important role in the rescue of blocked DNA replication forks via replication fork reversal (RFR). RuvA specifically binds to HJ cruciform DNA, conferring on it an open structure. The RuvB hexamer acts as an ATP-dependent pump, pulling dsDNA into and through the RuvAB complex. RuvB forms 2 homohexamers on either side of HJ DNA bound by 1 or 2 RuvA tetramers; 4 subunits per hexamer contact DNA at a time. Coordinated motions by a converter formed by DNA-disengaged RuvB subunits stimulates ATP hydrolysis and nucleotide exchange. Immobilization of the converter enables RuvB to convert the ATP-contained energy into a lever motion, pulling 2 nucleotides of DNA out of the RuvA tetramer per ATP hydrolyzed, thus driving DNA branch migration. The RuvB motors rotate together with the DNA substrate, which together with the progressing nucleotide cycle form the mechanistic basis for DNA recombination by continuous HJ branch migration. Branch migration allows RuvC to scan DNA until it finds its consensus sequence, where it cleaves and resolves cruciform DNA. This chain is Holliday junction branch migration complex subunit RuvB, found in Helicobacter acinonychis (strain Sheeba).